Reading from the N-terminus, the 282-residue chain is Nudix hydrolase 7 (282 aa).

The Nudix hydrolase domain maps to 101–233; it reads SHVVGAGALV…KNEMFKFMAN (133 aa). A Nudix box motif is present at residues 139 to 160; the sequence is GVINEGEDIWTGVAREVEEETG. Positions 154 and 158 each coordinate Mg(2+).

The protein belongs to the Nudix hydrolase family. In terms of assembly, homodimer. Interacts with RACK1A, GG1 and GG2. Mg(2+) is required as a cofactor. Expressed in stems, leaves, roots, flowers and siliques.

Its subcellular location is the nucleus. It is found in the cytoplasm. The protein localises to the cell membrane. It carries out the reaction ADP-D-ribose + H2O = D-ribose 5-phosphate + AMP + 2 H(+). The catalysed reaction is NAD(+) + H2O = beta-nicotinamide D-ribonucleotide + AMP + 2 H(+). The enzyme catalyses NADH + H2O = reduced beta-nicotinamide D-ribonucleotide + AMP + 2 H(+). With respect to regulation, not inhibited by fluoride. Its function is as follows. Mediates the hydrolysis of some nucleoside diphosphate derivatives. Can use both NADH and ADP-ribose as substrates, but not 8-oxo-dGTP, cyclic ADP-ribose, GDP-mannose, UDP-glucose, ATP, or GTP. Exerts negative control of EDS1 signaling. This chain is Nudix hydrolase 7 (NUDT7), found in Arabidopsis thaliana (Mouse-ear cress).